A 63-amino-acid polypeptide reads, in one-letter code: Metallothionein-like protein type 3 (63 aa).

Belongs to the metallothionein superfamily. Type 15 family.

Its function is as follows. Metallothioneins have a high content of cysteine residues that bind various heavy metals. In Actinidia deliciosa (Kiwi), this protein is Metallothionein-like protein type 3.